The sequence spans 376 residues: tRNA-specific 2-thiouridylase MnmA (376 aa).

ATP is bound by residues Gly14–Ser21 and Met40. An interaction with target base in tRNA region spans residues Asn100–Asp102. Cys105 functions as the Nucleophile in the catalytic mechanism. A disulfide bridge links Cys105 with Cys202. Gly129 lines the ATP pocket. The segment at Lys152 to Gln154 is interaction with tRNA. The active-site Cysteine persulfide intermediate is the Cys202. The tract at residues Arg315–Tyr316 is interaction with tRNA.

The protein belongs to the MnmA/TRMU family.

It is found in the cytoplasm. It catalyses the reaction S-sulfanyl-L-cysteinyl-[protein] + uridine(34) in tRNA + AH2 + ATP = 2-thiouridine(34) in tRNA + L-cysteinyl-[protein] + A + AMP + diphosphate + H(+). Functionally, catalyzes the 2-thiolation of uridine at the wobble position (U34) of tRNA, leading to the formation of s(2)U34. The sequence is that of tRNA-specific 2-thiouridylase MnmA from Lactococcus lactis subsp. lactis (strain IL1403) (Streptococcus lactis).